Here is a 413-residue protein sequence, read N- to C-terminus: Serine--tRNA ligase (413 aa).

221–223 (TAE) contacts L-serine. Residue 252–254 (RRE) participates in ATP binding. L-serine is bound at residue E275. An ATP-binding site is contributed by 339–342 (EVSS). Residue S375 participates in L-serine binding.

It belongs to the class-II aminoacyl-tRNA synthetase family. Type-1 seryl-tRNA synthetase subfamily. Homodimer. The tRNA molecule binds across the dimer.

The protein resides in the cytoplasm. It carries out the reaction tRNA(Ser) + L-serine + ATP = L-seryl-tRNA(Ser) + AMP + diphosphate + H(+). The catalysed reaction is tRNA(Sec) + L-serine + ATP = L-seryl-tRNA(Sec) + AMP + diphosphate + H(+). Its pathway is aminoacyl-tRNA biosynthesis; selenocysteinyl-tRNA(Sec) biosynthesis; L-seryl-tRNA(Sec) from L-serine and tRNA(Sec): step 1/1. Catalyzes the attachment of serine to tRNA(Ser). Is also able to aminoacylate tRNA(Sec) with serine, to form the misacylated tRNA L-seryl-tRNA(Sec), which will be further converted into selenocysteinyl-tRNA(Sec). The sequence is that of Serine--tRNA ligase from Dehalococcoides mccartyi (strain ATCC BAA-2100 / JCM 16839 / KCTC 5957 / BAV1).